Consider the following 201-residue polypeptide: Small ribosomal subunit protein uS4c (201 aa).

Residues 20–43 form a disordered region; it reads GLTSKRPRAGSDLRNQSRSGKRSQ. An S4 RNA-binding domain is found at 89–149; that stretch reads MRLDNILFRL…NEQKSRALIQ (61 aa).

Belongs to the universal ribosomal protein uS4 family. In terms of assembly, part of the 30S ribosomal subunit. Contacts protein S5. The interaction surface between S4 and S5 is involved in control of translational fidelity.

The protein resides in the plastid. The protein localises to the chloroplast. One of the primary rRNA binding proteins, it binds directly to 16S rRNA where it nucleates assembly of the body of the 30S subunit. In terms of biological role, with S5 and S12 plays an important role in translational accuracy. The protein is Small ribosomal subunit protein uS4c (rps4) of Vitis vinifera (Grape).